The following is a 537-amino-acid chain: Pancreatic secretory granule membrane major glycoprotein GP2 (537 aa).

A signal peptide spans 1–28 (MPHLMERMVGSGLLWLALVSCILTQASA). A beta hairpin region spans residues 41-60 (SYGLDLDCGAPGTPEAHVCF). 11 cysteine pairs are disulfide-bonded: Cys-48-Cys-59, Cys-63-Cys-157, Cys-85-Cys-172, Cys-107-Cys-145, Cys-113-Cys-177, Cys-138-Cys-146, Cys-190-Cys-200, Cys-194-Cys-209, Cys-211-Cys-241, Cys-229-Cys-320, and Cys-261-Cys-284. Residues 61 to 81 (DPCQNYTLLDEPFRSTENSAG) form a D10C region. Asn-65 is a glycosylation site (N-linked (GlcNAc...) (high mannose) asparagine). Asn-88, Asn-122, and Asn-134 each carry an N-linked (GlcNAc...) asparagine glycan. The EGF-like domain maps to 186-230 (VEDKCEKACRPEEECLALNSTWGCFCRQDLNSSDVHSLQPQLDCG). 3 N-linked (GlcNAc...) asparagine glycosylation sites follow: Asn-204, Asn-216, and Asn-260. The ZP-N stretch occupies residues 228–321 (DCGPREIKVK…TILNINFQCA (94 aa)). A ZP domain is found at 228 to 484 (DCGPREIKVK…PSCSRSQVRS (257 aa)). N-linked (GlcNAc...) asparagine glycosylation is found at Asn-291 and Asn-342. A flexible ZP-N/ZP-C linker region spans residues 322-345 (YPLDMKVSLQAALQPIVSSLNVSV). An internal hydrophobic patch (IHP) region spans residues 346 to 357 (DGNGEFIVRMAL). Residues 346–484 (DGNGEFIVRM…PSCSRSQVRS (139 aa)) are ZP-C. N-linked (GlcNAc...) asparagine glycosylation is present at Asn-362. Disulfide bonds link Cys-401/Cys-461, Cys-422/Cys-477, and Cys-466/Cys-473. The interval 491–499 (LARVLDLGP) is external hydrophobic patch (EHP). Residue Asn-512 is the site of GPI-anchor amidated asparagine attachment. The propeptide at 513–537 (GTPSTAGFLVAWPMVLLTVLLAWLF) is removed in mature form.

As to quaternary structure, interacts with SYCN. Interacts with bacterial adhesin fimH. In terms of processing, N-glycosylated. Glycosylated Asn-65 may be required for interaction with bacterial adhesin fimH. In terms of tissue distribution, expressed in pancreas (at protein level). Specifically expressed by M (microfold) cells which are atypical epithelial cells of the intestine (at protein level).

It is found in the zymogen granule membrane. It localises to the secreted. The protein localises to the cell membrane. The protein resides in the apical cell membrane. Its subcellular location is the membrane raft. It is found in the endosome. Functions as an intestinal M-cell transcytotic receptor specific for type-I-piliated bacteria that participates in the mucosal immune response toward these bacteria. At the apical membrane of M-cells it binds fimH, a protein of the bacteria type I pilus tip. Internalizes bound bacteria, like E.coli and S.typhimurium, from the lumen of the intestine and delivers them, through M-cells, to the underlying organized lymphoid follicles where they are captured by antigen-presenting dendritic cells to elicit a mucosal immune response. In Homo sapiens (Human), this protein is Pancreatic secretory granule membrane major glycoprotein GP2.